We begin with the raw amino-acid sequence, 682 residues long: MAAAVASGIAPTTAMVDQVIPNQPTVAAAAPPPFPAVSQVAAVAAAAAAAEALQTHPNSSLYVGDLDPSVNESHLLDLFNQVAPVHNLRVCRDLTHRSLGYAYVNFANPEDASRAMESLNYAPIRDRPIRIMLSNRDPSTRLSGKGNVFIKNLDASIDNKALYETFSSFGTILSCKVAMDVVGRSKGYGFVQFEKEETAQAAIDKLNGMLLNDKQVFVGHFVRRQDRARSESGAVPSFTNVYVKNLPKEITDDELKKTFGKYGDISSAVVMKDQSGNSRSFGFVNFVSPEAAAVAVEKMNGISLGEDVLYVGRAQKKSDREEELRRKFEQERISRFEKLQGSNLYLKNLDDSVNDEKLKEMFSEYGNVTSCKVMMNSQGLSRGFGFVAYSNPEEALLAMKEMNGKMIGRKPLYVALAQRKEERQAHLQSLFTQIRSPGTMSPVPSPMSGFHHHPPGGPMSGPHHPMFIGHNGQGLVPSQPMGYGYQVQFMPGMRPGAGPPNFMMPFPLQRQTQPGPRVGFRRGANNMQQQFQQQQMLQQNASRFMGGAGNRRNGMEASAPQGIIPLPLNASANSHNAPQRSHKPTPLTISKLASDLALASPDKHPRMLGDHLYPLVEQQEPANAAKVTGMLLEMDQAEILHLLESPEALKAKVSEALDVLRRSADPAAVSSVDDQFALSSSE.

4 consecutive RRM domains span residues 59-136 (SSLY…LSNR), 146-223 (GNVF…HFVR), 239-316 (TNVY…RAQK), and 342-419 (SNLY…LAQR). The region spanning 588–665 (TISKLASDLA…ALDVLRRSAD (78 aa)) is the PABC domain. Position 600 is a phosphoserine (serine 600).

Belongs to the polyadenylate-binding protein type-1 family. Expressed predominantly in immature flowers but also at lower levels in mature flowers and siliques. Detected in tapetum, pollen, ovules and developing seeds. Also detected in primary inflorescences and immature siliques.

It is found in the cytoplasm. Its subcellular location is the nucleus. Functionally, binds the poly(A) tail of mRNA. Appears to be an important mediator of the multiple roles of the poly(A) tail in mRNA biogenesis, stability and translation. The sequence is that of Polyadenylate-binding protein 5 (PAB5) from Arabidopsis thaliana (Mouse-ear cress).